Consider the following 250-residue polypeptide: Small ribosomal subunit protein uS3 (250 aa).

One can recognise a KH type-2 domain in the interval 39–107; it reads VREFLTKKLK…PAQVSINEID (69 aa). The interval 215–250 is disordered; that stretch reads MNPAPAEERPAKRGRGRGEGQERRGRRGDRAADKGE. The span at 220 to 250 shows a compositional bias: basic and acidic residues; sequence AEERPAKRGRGRGEGQERRGRRGDRAADKGE.

It belongs to the universal ribosomal protein uS3 family. In terms of assembly, part of the 30S ribosomal subunit. Forms a tight complex with proteins S10 and S14.

Binds the lower part of the 30S subunit head. Binds mRNA in the 70S ribosome, positioning it for translation. This is Small ribosomal subunit protein uS3 from Acinetobacter baumannii (strain AB307-0294).